Consider the following 384-residue polypeptide: 8-amino-7-oxononanoate synthase (384 aa).

R21 lines the substrate pocket. 108 to 109 serves as a coordination point for pyridoxal 5'-phosphate; that stretch reads GF. Position 133 (H133) interacts with substrate. S179, H207, and T233 together coordinate pyridoxal 5'-phosphate. At K236 the chain carries N6-(pyridoxal phosphate)lysine. Position 352 (T352) interacts with substrate.

This sequence belongs to the class-II pyridoxal-phosphate-dependent aminotransferase family. BioF subfamily. As to quaternary structure, homodimer. The cofactor is pyridoxal 5'-phosphate.

The catalysed reaction is 6-carboxyhexanoyl-[ACP] + L-alanine + H(+) = (8S)-8-amino-7-oxononanoate + holo-[ACP] + CO2. The protein operates within cofactor biosynthesis; biotin biosynthesis. Functionally, catalyzes the decarboxylative condensation of pimeloyl-[acyl-carrier protein] and L-alanine to produce 8-amino-7-oxononanoate (AON), [acyl-carrier protein], and carbon dioxide. This Shigella flexneri serotype 5b (strain 8401) protein is 8-amino-7-oxononanoate synthase.